A 277-amino-acid chain; its full sequence is Large ribosomal subunit protein uL2 (277 aa).

The disordered stretch occupies residues 211 to 277 (SRWKGVRPTV…KLIVRGRKKK (67 aa)).

It belongs to the universal ribosomal protein uL2 family. Part of the 50S ribosomal subunit. Forms a bridge to the 30S subunit in the 70S ribosome.

Its function is as follows. One of the primary rRNA binding proteins. Required for association of the 30S and 50S subunits to form the 70S ribosome, for tRNA binding and peptide bond formation. It has been suggested to have peptidyltransferase activity; this is somewhat controversial. Makes several contacts with the 16S rRNA in the 70S ribosome. The protein is Large ribosomal subunit protein uL2 of Staphylococcus epidermidis (strain ATCC 35984 / DSM 28319 / BCRC 17069 / CCUG 31568 / BM 3577 / RP62A).